Reading from the N-terminus, the 116-residue chain is Phycoerythrin alpha-3 subunit (116 aa).

Residues serine 53, glutamate 63, arginine 64, cysteine 67, and lysine 85 each contribute to the (2R,3E)-phycoerythrobilin site.

Belongs to the phycoerythrin family. As to quaternary structure, heterotetramer of 2 different alpha chains and 2 identical beta chains which form 2 alpha-beta heterodimers within the heterotetramer. The two alpha-beta heterodimers are rotated to an open configuration in contrast to the closed configuration found in other cryptophyte species due to the insertion of a single amino acid, Asp-65, in a conserved region of the alpha chain. In the open form, the central chromophores are not in physical contact but are separated by a water-filled channel. Post-translationally, contains three phycoerythrobilin chromophores with binding mediated by both the alpha and beta subunits.

Its subcellular location is the plastid. The protein localises to the chloroplast thylakoid membrane. Its function is as follows. Light-harvesting photosynthetic tetrapyrrole chromophore-protein from the phycobiliprotein complex. The protein is Phycoerythrin alpha-3 subunit of Hemiselmis andersenii (Cryptophyte alga).